A 469-amino-acid chain; its full sequence is Protein RUFY3 (469 aa).

Residues Thr-5 and Thr-12 each carry the phosphothreonine modification. Residues Ser-34 and Ser-49 each carry the phosphoserine modification. Thr-51 bears the Phosphothreonine mark. The region spanning 95-227 (DSDYAPLQQF…IDANFCMKGE (133 aa)) is the RUN domain. Coiled-coil stretches lie at residues 271 to 362 (NRHL…VEKE) and 422 to 463 (KSEL…AANK).

As to quaternary structure, interacts with PAK1. Interacts (via C-terminus) with Ras-related Rab-5 proteins. Interacts (via C-terminus) with Ras-related Rap-2 proteins. Interacts with PIK3CA and PIK3R1. Interacts (via N-terminus) with FSCN1; this interaction induces neuron axon development. Interacts with DBN1. Interacts (via the second coiled coil) with GTP-, but not GDP-bound ARL8A and ARL8B. Interacts with dynactin/DCTN1 and the dynein intermediate chain DYNC1I1/2. Directly interacts with DYNC1LI1. In terms of processing, phosphorylated by PAK1. Isoform 1 is partially phosphorylated. Overexpressed in gastric cancer cells and tissues (at protein level).

It is found in the cytoplasm. It localises to the endomembrane system. The protein localises to the cell projection. Its subcellular location is the invadopodium. The protein resides in the perikaryon. It is found in the growth cone. It localises to the filopodium. The protein localises to the lamellipodium. Its subcellular location is the lysosome. Functionally, ARL8 effector that promotes the coupling of endolysosomes to dynein-dynactin for retrograde transport along microtubules. Acts by binding both GTP-bound ARL8 and dynein-dynactin. In nonneuronal cells, promotes concentration of endolysosomes in the juxtanuclear area. In hippocampal neurons, drives retrograde transport of endolysosomes from the axon to the soma. Plays a role in the generation of neuronal polarity formation and axon growth. Implicated in the formation of a single axon by developing neurons. May inhibit the formation of additional axons by inhibition of PI3K in minor neuronal processes. Plays a role in the formation of F-actin-enriched protrusive structures at the cell periphery. Plays a role in cytoskeletal organization by regulating the subcellular localization of FSCN1 and DBN1 at axonal growth cones. This is Protein RUFY3 from Homo sapiens (Human).